We begin with the raw amino-acid sequence, 418 residues long: MFQKPKGTRDFLPVEMKKRKLIEKKLRNIFDSYNFSEINTPTFESFELLSKKTGEEIRNQLFVFNDHGNREMGLRPEFTSSVARFYINEFKNTPKPVKMYYFGNCFRYENPQAGRYREFWQMGAELIGSNKSISDAEVLNMAIEGLKSINMDFEINIGHLGVLKGVFEKYSLSEEDETLIRRLIDKEDTEGLKQVLLKIEEEKNIEISKKVFEVLTLKGGKEVISKLKEKLTDFEKSLDALNNLDEILELVPHDYVVNFGIARGLDYYTGMVFEIYGKKEGARQVCGGGRYDNLIELFEGEKSPAVGFAYGFDRIILNIDDFEVQDDSIFIIPVKNDIFLLKECLKIAKTLRDFGNPVEIDLMGRKLNKALNYANSKNIKRVIIIGENDIFSGKIPLKNMETGEQVLIDVKDLKNFPC.

This sequence belongs to the class-II aminoacyl-tRNA synthetase family.

It is found in the cytoplasm. It carries out the reaction tRNA(His) + L-histidine + ATP = L-histidyl-tRNA(His) + AMP + diphosphate + H(+). The chain is Histidine--tRNA ligase from Methanococcus vannielii (strain ATCC 35089 / DSM 1224 / JCM 13029 / OCM 148 / SB).